The sequence spans 345 residues: Inositol phosphoceramide mannosyltransferase 2 (345 aa).

The chain crosses the membrane as a helical span at residues 4–24; that stretch reads VIYKFAVFAAVNFFLMSSIVL. Asparagine 55 carries N-linked (GlcNAc...) asparagine glycosylation. A helical transmembrane segment spans residues 220–240; that stretch reads YWLPYLTIMLSTGPLSISFLW. N-linked (GlcNAc...) asparagine glycosylation is present at asparagine 269. A helical membrane pass occupies residues 296–316; the sequence is LAYVIVAGFCLYFILSYMFFS.

Belongs to the glycosyltransferase 32 family.

It localises to the golgi apparatus. The protein resides in the cis-Golgi network membrane. It is found in the trans-Golgi network membrane. In terms of biological role, with imt1 and imt3, is required for the synthesis of mannosyl phosphorylinositol ceramide (MIPC). Catalyzes the addition of mannosyl to phosphorylinositol ceramide (IPC). MIPC is essential for cell morphology, cell-surface distribution of ergosterol, localization for plasma-membrane transporters, and lipid-raft-mediated endocytosis of plasma membrane proteins to the vacuole. The protein is Inositol phosphoceramide mannosyltransferase 2 of Schizosaccharomyces pombe (strain 972 / ATCC 24843) (Fission yeast).